The sequence spans 530 residues: Chaperone Ric-8A (530 aa).

A Phosphoserine modification is found at S435. 2 positions are modified to phosphothreonine: T440 and T442. Phosphoserine occurs at positions 501, 522, 523, and 527.

This sequence belongs to the synembryn family. Interacts with GDP-bound G alpha proteins GNAI1, GNAO1 and GNAQ, and with GNA13 with lower affinity. Does not interact with G-alpha proteins when they are in complex with subunits beta and gamma. Interacts (via C-terminus) with RGS14; the interaction stimulates the dissociation of the complex between RGS14 and the active GTP-bound form of GNAI1. Interacts with NCS1; interaction is favored in the absence of Ca(2+) and myristoylation of NCS1 is not required. Phosphorylated at Ser-435 and Thr-440 by CK2, stabilizing its interface with G alpha proteins.

It is found in the cytoplasm. Its subcellular location is the cell cortex. Functionally, chaperone that specifically binds and folds nascent G alpha proteins prior to G protein heterotrimer formation, promoting their stability and activity: folds GNAI1, GNAO1, GNA13 and GNAQ. Does not fold G(s) G-alpha proteins GNAS nor GNAL. Also acts as a guanine nucleotide exchange factor (GEF) for G alpha proteins by stimulating exchange of bound GDP for free GTP. Involved in regulation of microtubule pulling forces during mitotic movement of chromosomes by stimulating G(i)-alpha protein (GNAI1), possibly leading to release G(i)-alpha-GTP and NuMA proteins from the NuMA-GPSM2-G(i)-alpha-GDP complex. Also acts as an activator for G(q)-alpha (GNAQ) protein by enhancing the G(q)-coupled receptor-mediated ERK activation. The chain is Chaperone Ric-8A (RIC8A) from Macaca fascicularis (Crab-eating macaque).